A 100-amino-acid chain; its full sequence is MITKEEAQKIAKLARLKFEEDTIEKFFTQLSTIMDMIDILNEIDCKDIEPLTSVCNMNARMREDAVTSSDLSSELFDNVSGNSAQLAKEVKYFITPKVVE.

The protein belongs to the GatC family. Heterotrimer of A, B and C subunits.

It carries out the reaction L-glutamyl-tRNA(Gln) + L-glutamine + ATP + H2O = L-glutaminyl-tRNA(Gln) + L-glutamate + ADP + phosphate + H(+). The catalysed reaction is L-aspartyl-tRNA(Asn) + L-glutamine + ATP + H2O = L-asparaginyl-tRNA(Asn) + L-glutamate + ADP + phosphate + 2 H(+). Allows the formation of correctly charged Asn-tRNA(Asn) or Gln-tRNA(Gln) through the transamidation of misacylated Asp-tRNA(Asn) or Glu-tRNA(Gln) in organisms which lack either or both of asparaginyl-tRNA or glutaminyl-tRNA synthetases. The reaction takes place in the presence of glutamine and ATP through an activated phospho-Asp-tRNA(Asn) or phospho-Glu-tRNA(Gln). The sequence is that of Aspartyl/glutamyl-tRNA(Asn/Gln) amidotransferase subunit C from Rickettsia peacockii (strain Rustic).